The primary structure comprises 257 residues: Beta-fibrinogenase (257 aa).

An N-terminal signal peptide occupies residues 1-18 (MVLIRVLANLLLLQLSHA). A propeptide spanning residues 19 to 24 (QKSSEL) is cleaved from the precursor. The Peptidase S1 domain maps to 25-248 (VVGGDECNIN…YTDWIQSIIA (224 aa)). 6 disulfides stabilise this stretch: Cys31-Cys162, Cys49-Cys65, Cys97-Cys255, Cys141-Cys209, Cys173-Cys188, and Cys199-Cys224. Asn44 is a glycosylation site (N-linked (GlcNAc...) asparagine). The Charge relay system role is filled by His64. Residues Asn78 and Asn102 are each glycosylated (N-linked (GlcNAc...) asparagine). The Charge relay system role is filled by Asp109. Residues Asn153 and Asn169 are each glycosylated (N-linked (GlcNAc...) asparagine). The Charge relay system role is filled by Ser203. Asn250 is a glycosylation site (N-linked (GlcNAc...) asparagine).

In terms of assembly, monomer. In terms of processing, glycosylated. Contains 23.0% of hexoses, 8.3% of hexosamines and 1.0% of sialic acids. In terms of tissue distribution, expressed by the venom gland.

Its subcellular location is the secreted. Inhibited by diisopropylfluorophosphate (DFP) and PMSF. Snake venom serine protease that has fibrinogenolytic activities by hydrolyzing the beta chain of fibrinogen (FGB). Typical arginine esterase which hydrolyzes esters and amides of arginine. In Macrovipera lebetinus (Levantine viper), this protein is Beta-fibrinogenase.